The following is a 1485-amino-acid chain: Chromosome partition protein MukB (1485 aa).

An ATP-binding site is contributed by 34-41; it reads GGNGAGKS. Coiled-coil stretches lie at residues 337-480, 509-605, 780-805, 835-915, 977-1116, and 1210-1235; these read LNLV…QAYQ, QHLA…PVWL, RAAR…ATLS, EAEI…IQQH, GMLT…AKAG, and EAIE…KLAI. Residues 666-783 are flexible hinge; the sequence is PSGAEDARLI…EVPLFGRAAR (118 aa).

Belongs to the SMC family. MukB subfamily. As to quaternary structure, homodimerization via its hinge domain. Binds to DNA via its C-terminal region. Interacts, and probably forms a ternary complex, with MukE and MukF via its C-terminal region. The complex formation is stimulated by calcium or magnesium. Interacts with tubulin-related protein FtsZ.

It is found in the cytoplasm. The protein resides in the nucleoid. In terms of biological role, plays a central role in chromosome condensation, segregation and cell cycle progression. Functions as a homodimer, which is essential for chromosome partition. Involved in negative DNA supercoiling in vivo, and by this means organize and compact chromosomes. May achieve or facilitate chromosome segregation by condensation DNA from both sides of a centrally located replisome during cell division. The chain is Chromosome partition protein MukB from Yersinia pseudotuberculosis serotype O:1b (strain IP 31758).